Consider the following 620-residue polypeptide: Chaperone protein DnaK (620 aa).

Position 197 is a phosphothreonine; by autocatalysis (Thr-197). The tract at residues 591-620 is disordered; sequence AQKLGEAMANKNNAEQPKKKDDDVIDAEVE.

It belongs to the heat shock protein 70 family.

Acts as a chaperone. The protein is Chaperone protein DnaK of Helicobacter pylori (strain HPAG1).